The following is a 909-amino-acid chain: Disintegrin and metalloproteinase domain-containing protein 12 (909 aa).

The signal sequence occupies residues 1–28; sequence MAARPLPVSPARALLLALAGALLAPCEA. The propeptide occupies 29–207; the sequence is RGVSLWNQGR…SQTWARRHKR (179 aa). N111 and N149 each carry an N-linked (GlcNAc...) asparagine glycan. Residues 177–184 carry the Cysteine switch motif; sequence GSCGSHHN. Residues C179 and H350 each coordinate Zn(2+). Over 208-708 the chain is Extracellular; sequence ETLKATKYVE…GPIRQADNQG (501 aa). The region spanning 214 to 416 is the Peptidase M12B domain; it reads KYVELVIVAD…GMGVCLFNLP (203 aa). Disulfide bonds link C325/C411, C367/C395, and C369/C378. The active site involves E351. Zn(2+) contacts are provided by H354 and H360. N381 and N452 each carry an N-linked (GlcNAc...) asparagine glycan. The 87-residue stretch at 424–510 folds into the Disintegrin domain; it reads GQKCGNRFVE…HCPANVYLHD (87 aa). Cysteines 482 and 502 form a disulfide. N-linked (GlcNAc...) asparagine glycosylation occurs at N651. In terms of domain architecture, EGF-like spans 656–688; it reads GVHECAMQCHGRGVCNNRKNCHCEAHWAPPFCD. Intrachain disulfides connect C660–C670, C664–C676, and C678–C687. Residues 709 to 729 traverse the membrane as a helical segment; it reads LTIGILVTILCLLAAGFVVYL. Topologically, residues 730–909 are cytoplasmic; it reads KRKTLIRLLF…PRSTHTAYIK (180 aa). Positions 822 to 862 are disordered; that stretch reads LHRAPRAPSVPARPLPAKPALRQAQGTCKPNPPQKPLPADP. Positions 828–834 match the SH3-binding; class II motif; sequence APSVPAR. Positions 834-841 match the SH3-binding; class I motif; that stretch reads RPLPAKPA. Residues 851–860 are compositionally biased toward pro residues; the sequence is PNPPQKPLPA. The short motif at 885–891 is the SH3-binding; class I element; it reads RLAPLRP. Y907 is subject to Phosphotyrosine; by SRC.

In terms of assembly, interacts with alpha-actinin-2 and with syndecans. Interacts with SH3PXD2A. Interacts with FST3. Interacts with RACK1; the interaction is required for PKC-dependent translocation of ADAM12 to the cell membrane. Zn(2+) serves as cofactor. The precursor is cleaved by a furin endopeptidase. As to expression, isoform 1 is expressed in placenta and skeletal, cardiac, and smooth muscle. Isoform 2 seems to be expressed only in placenta or in embryo and fetus. Both forms were expressed in some tumor cells lines. Not detected in brain, lung, liver, kidney or pancreas.

The protein localises to the cell membrane. Its subcellular location is the secreted. Involved in skeletal muscle regeneration, specifically at the onset of cell fusion. Also involved in macrophage-derived giant cells (MGC) and osteoclast formation from mononuclear precursors. The chain is Disintegrin and metalloproteinase domain-containing protein 12 (ADAM12) from Homo sapiens (Human).